Here is a 161-residue protein sequence, read N- to C-terminus: Allophycocyanin alpha chain (161 aa).

Residue Asn-71 is modified to N4-methylasparagine. A (2R,3E)-phycocyanobilin-binding site is contributed by Cys-81.

The protein belongs to the phycobiliprotein family. As to quaternary structure, heterodimer of an alpha and a beta chain. Contains one covalently linked phycocyanobilin chromophore.

The protein resides in the plastid. It is found in the cyanelle thylakoid membrane. Functionally, light-harvesting photosynthetic bile pigment-protein from the phycobiliprotein complex. Allophycocyanin has a maximum absorption at approximately 650 nanometers. In Cyanophora paradoxa, this protein is Allophycocyanin alpha chain (apcA).